Here is a 455-residue protein sequence, read N- to C-terminus: Glutamyl-tRNA reductase (455 aa).

Residues 49–52 (TCNR), Ser-109, 114–116 (EAQ), and Gln-120 each bind substrate. The active-site Nucleophile is the Cys-50. 190–195 (GAGAMG) provides a ligand contact to NADP(+).

Belongs to the glutamyl-tRNA reductase family. In terms of assembly, homodimer.

It carries out the reaction (S)-4-amino-5-oxopentanoate + tRNA(Glu) + NADP(+) = L-glutamyl-tRNA(Glu) + NADPH + H(+). The protein operates within porphyrin-containing compound metabolism; protoporphyrin-IX biosynthesis; 5-aminolevulinate from L-glutamyl-tRNA(Glu): step 1/2. Functionally, catalyzes the NADPH-dependent reduction of glutamyl-tRNA(Glu) to glutamate 1-semialdehyde (GSA). The chain is Glutamyl-tRNA reductase from Salinispora tropica (strain ATCC BAA-916 / DSM 44818 / JCM 13857 / NBRC 105044 / CNB-440).